The primary structure comprises 603 residues: Coagulation factor XII (603 aa).

Residues 1-18 (GRLLLGSLLVSLESALSA) form the signal peptide. The region spanning 41–89 (VTGEPCYFPFQYNRQLYHHCIHKGRPGPRPWCATTPNFDQDQQWAYCLE) is the Fibronectin type-II domain. Intrachain disulfides connect Cys46–Cys72, Cys60–Cys87, Cys97–Cys109, Cys103–Cys118, Cys120–Cys129, Cys134–Cys162, Cys160–Cys169, Cys177–Cys188, Cys182–Cys197, Cys199–Cys208, Cys216–Cys294, Cys237–Cys276, Cys265–Cys289, Cys345–Cys472, Cys383–Cys399, Cys391–Cys461, Cys422–Cys425, Cys488–Cys557, Cys520–Cys536, and Cys547–Cys578. Residues 93-130 (VKDHCSKHNPCQRGGICVNTLSSPHCLCPDHLTGKHCQ) enclose the EGF-like 1 domain. The Fibronectin type-I domain maps to 132–172 (EKCFEPQLHRFFHENEIWFRTGPAGVAKCHCKGPDAHCKQM). Positions 173-209 (HSQECQTNPCLNGGRCLEVEGHHLCDCPMGYTGPFCD) constitute an EGF-like 2 domain. In terms of domain architecture, Kringle spans 216 to 294 (CYEGRGVSYR…SWEYCDLAQC (79 aa)). Asn248 and Asn270 each carry an N-linked (GlcNAc...) asparagine glycan. One can recognise a Peptidase S1 domain in the interval 359–602 (IVGGLVALPG…YLTWIQKHTA (244 aa)). The Charge relay system role is filled by His398. The N-linked (GlcNAc...) asparagine glycan is linked to Asn419. The active-site Charge relay system is the Asp447. The Charge relay system role is filled by Ser551.

It belongs to the peptidase S1 family. Interacts with HRG; the interaction, which is enhanced in the presence of zinc ions and inhibited by heparin-binding, inhibits factor XII autoactivation and contact-initiated coagulation. Post-translationally, O- and N-glycosylated.

The protein resides in the secreted. It carries out the reaction Selective cleavage of Arg-|-Ile bonds in factor VII to form factor VIIa and factor XI to form factor XIa.. With respect to regulation, activity is promoted in the presence of negatively charged surfaces. In terms of biological role, factor XII is a serum glycoprotein that participates in the initiation of blood coagulation, fibrinolysis, and the generation of bradykinin and angiotensin. Prekallikrein is cleaved by factor XII to form kallikrein, which then cleaves factor XII first to alpha-factor XIIa and then trypsin cleaves it to beta-factor XIIa. Alpha-factor XIIa activates factor XI to factor XIa. This Cavia porcellus (Guinea pig) protein is Coagulation factor XII (F12).